The sequence spans 98 residues: Large ribosomal subunit protein eL21 (98 aa).

A compositionally biased stretch (basic residues) spans 1–24; that stretch reads MVKKAHSFRRKTRGKLSKHPRRRG. The disordered stretch occupies residues 1–27; that stretch reads MVKKAHSFRRKTRGKLSKHPRRRGLPP.

The protein belongs to the eukaryotic ribosomal protein eL21 family. As to quaternary structure, part of the 50S ribosomal subunit.

The chain is Large ribosomal subunit protein eL21 from Thermococcus kodakarensis (strain ATCC BAA-918 / JCM 12380 / KOD1) (Pyrococcus kodakaraensis (strain KOD1)).